Reading from the N-terminus, the 364-residue chain is DNA polymerase IV (364 aa).

Residues 8-189 (IIHIDMDCYF…LPLTKIPGVG (182 aa)) form the UmuC domain. D12 and D107 together coordinate Mg(2+). E108 is an active-site residue.

This sequence belongs to the DNA polymerase type-Y family. Monomer. Requires Mg(2+) as cofactor.

The protein resides in the cytoplasm. It carries out the reaction DNA(n) + a 2'-deoxyribonucleoside 5'-triphosphate = DNA(n+1) + diphosphate. Poorly processive, error-prone DNA polymerase involved in untargeted mutagenesis. Copies undamaged DNA at stalled replication forks, which arise in vivo from mismatched or misaligned primer ends. These misaligned primers can be extended by PolIV. Exhibits no 3'-5' exonuclease (proofreading) activity. May be involved in translesional synthesis, in conjunction with the beta clamp from PolIII. The polypeptide is DNA polymerase IV (Shewanella woodyi (strain ATCC 51908 / MS32)).